The sequence spans 212 residues: Ropporin-1B (212 aa).

Positions 12–49 (PELPKMLKEFAKAAIRAQPQDLIQWGADYFEALSRGET) constitute an RIIa domain. A Phosphoserine modification is found at Ser56. The interval 209 to 212 (VWLE) is interaction with RHPN1.

Belongs to the ropporin family. As to quaternary structure, homodimer. Interacts with RHPN1. May interact with SPA17. Interacts with AKAP3. Interacts with FSCB; the interaction increases upon spermatozoa capacitation conditions. Post-translationally, sumoylated, sumoylation decreases upon spermatozoa capacitation conditions.

The protein localises to the cell projection. The protein resides in the cilium. Its subcellular location is the flagellum. Functionally, important for male fertility. With ROPN1L, involved in fibrous sheath integrity and sperm motility, plays a role in PKA-dependent signaling processes required for spermatozoa capacitation. The sequence is that of Ropporin-1B (ROPN1B) from Homo sapiens (Human).